A 334-amino-acid chain; its full sequence is 6-phosphogluconolactonase (334 aa).

It belongs to the cycloisomerase 2 family.

The catalysed reaction is 6-phospho-D-glucono-1,5-lactone + H2O = 6-phospho-D-gluconate + H(+). It participates in carbohydrate degradation; pentose phosphate pathway; D-ribulose 5-phosphate from D-glucose 6-phosphate (oxidative stage): step 2/3. Its function is as follows. Catalyzes the hydrolysis of 6-phosphogluconolactone to 6-phosphogluconate. The protein is 6-phosphogluconolactonase of Yersinia pseudotuberculosis serotype O:1b (strain IP 31758).